A 664-amino-acid polypeptide reads, in one-letter code: NAD(P)H-quinone oxidoreductase chain 5 (664 aa).

16 helical membrane passes run 7 to 27 (YAWL…IGLI), 39 to 59 (LNAV…FGLL), 91 to 111 (HLSA…MIYT), 120 to 140 (GYVR…GLVF), 144 to 164 (LVQV…LIGF), 187 to 207 (FGLL…EFDL), 219 to 239 (GQIS…GPVA), 258 to 278 (TPIS…FLVA), 290 to 310 (AMNV…TIAL), 327 to 347 (LGYM…FHLM), 352 to 372 (FKAM…EVVG), 395 to 415 (ATTF…AGFW), 420 to 440 (ILGL…ATAG), 495 to 515 (FPLM…VPWG), 541 to 561 (FLIM…IASL), and 643 to 663 (VQFY…FFSV).

This sequence belongs to the complex I subunit 5 family.

The protein resides in the cell membrane. It carries out the reaction a plastoquinone + NADH + (n+1) H(+)(in) = a plastoquinol + NAD(+) + n H(+)(out). The catalysed reaction is a plastoquinone + NADPH + (n+1) H(+)(in) = a plastoquinol + NADP(+) + n H(+)(out). Functionally, NDH-1 shuttles electrons from NAD(P)H, via FMN and iron-sulfur (Fe-S) centers, to quinones in the respiratory chain. The immediate electron acceptor for the enzyme in this species is believed to be plastoquinone. Couples the redox reaction to proton translocation (for every two electrons transferred, four hydrogen ions are translocated across the cytoplasmic membrane), and thus conserves the redox energy in a proton gradient. The sequence is that of NAD(P)H-quinone oxidoreductase chain 5 (ndhF) from Picosynechococcus sp. (strain ATCC 27264 / PCC 7002 / PR-6) (Agmenellum quadruplicatum).